A 679-amino-acid polypeptide reads, in one-letter code: Protein FAM178B (679 aa).

A disordered region spans residues 70–113 (PLDQGPRCPARRPCSPASAPAPTSPKKPKIQAPGETFPTDWSPP). Residues 75–90 (PRCPARRPCSPASAPA) are compositionally biased toward low complexity.

It belongs to the FAM178 family.

The protein is Protein FAM178B of Homo sapiens (Human).